The chain runs to 322 residues: Eukaryotic translation initiation factor 3 subunit I (322 aa).

5 WD repeats span residues 4–43, 46–85, 141–180, 184–223, and 281–322; these read GHER…RLGT, GHQG…VIAS, MVES…KVVD, DHTA…CLKT, and GHFG…NIFE.

The protein belongs to the eIF-3 subunit I family. As to quaternary structure, component of the eukaryotic translation initiation factor 3 (eIF-3) complex. The eIF-3 complex interacts with pix.

Its subcellular location is the cytoplasm. Functionally, component of the eukaryotic translation initiation factor 3 (eIF-3) complex, which is involved in protein synthesis of a specialized repertoire of mRNAs and, together with other initiation factors, stimulates binding of mRNA and methionyl-tRNAi to the 40S ribosome. The eIF-3 complex specifically targets and initiates translation of a subset of mRNAs involved in cell proliferation. In Drosophila mojavensis (Fruit fly), this protein is Eukaryotic translation initiation factor 3 subunit I.